We begin with the raw amino-acid sequence, 478 residues long: RNA exonuclease 3 (478 aa).

Positions 320–465 constitute an Exonuclease domain; it reads VLALDCEMAF…EDAIAAMDVI (146 aa).

It belongs to the REXO1/REXO3 family.

It localises to the cytoplasm. It is found in the nucleus. In terms of biological role, 3' to 5' exoribonuclease required for proper 3' end maturation of MRP RNA and of the U5L snRNA. The protein is RNA exonuclease 3 (REX3) of Kluyveromyces lactis (strain ATCC 8585 / CBS 2359 / DSM 70799 / NBRC 1267 / NRRL Y-1140 / WM37) (Yeast).